The chain runs to 138 residues: Endoribonuclease YbeY (138 aa).

Zn(2+) contacts are provided by His-105, His-109, and Asp-115.

Belongs to the endoribonuclease YbeY family. It depends on Zn(2+) as a cofactor.

Its subcellular location is the cytoplasm. Its function is as follows. Single strand-specific metallo-endoribonuclease involved in late-stage 70S ribosome quality control and in maturation of the 3' terminus of the 16S rRNA. In Chlorobium phaeobacteroides (strain BS1), this protein is Endoribonuclease YbeY.